We begin with the raw amino-acid sequence, 504 residues long: Carnosic acid synthase (504 aa).

Residues 4-24 (FIILSLAFIAAWVVYSRWSEY) traverse the membrane as a helical segment. C447 is a heme binding site.

The protein belongs to the cytochrome P450 family. Heme serves as cofactor. As to expression, expressed in glandular trichomes of young leaves.

It localises to the membrane. The catalysed reaction is 11-hydroxyferruginol + 3 reduced [NADPH--hemoprotein reductase] + 3 O2 = carnosate + 3 oxidized [NADPH--hemoprotein reductase] + 4 H2O + 4 H(+). It catalyses the reaction miltiradiene + 2 reduced [NADPH--hemoprotein reductase] + 2 O2 = miltiradien-20-al + 2 oxidized [NADPH--hemoprotein reductase] + 3 H2O + 2 H(+). It carries out the reaction ferruginol + 3 reduced [NADPH--hemoprotein reductase] + 3 O2 = pisiferate + 3 oxidized [NADPH--hemoprotein reductase] + 4 H2O + 4 H(+). It functions in the pathway secondary metabolite biosynthesis; terpenoid biosynthesis. In terms of biological role, monooxygenase involved in the biosynthesis of carnosate, a potent antioxidant labdane-related diterpene natural products. Catalyzes the oxidation of 11-hydroxyferruginol to produce carnosate. Mediates the conversion of miltiradien into miltiradien-20-al. Also involved in the production of pisiferic acid and derivative products from ferruginol. This chain is Carnosic acid synthase, found in Rosmarinus officinalis (Rosemary).